The chain runs to 393 residues: NAD(P)H-quinone oxidoreductase subunit H, chloroplastic (393 aa).

The protein belongs to the complex I 49 kDa subunit family. NDH is composed of at least 16 different subunits, 5 of which are encoded in the nucleus.

It localises to the plastid. Its subcellular location is the chloroplast thylakoid membrane. It catalyses the reaction a plastoquinone + NADH + (n+1) H(+)(in) = a plastoquinol + NAD(+) + n H(+)(out). The catalysed reaction is a plastoquinone + NADPH + (n+1) H(+)(in) = a plastoquinol + NADP(+) + n H(+)(out). Its function is as follows. NDH shuttles electrons from NAD(P)H:plastoquinone, via FMN and iron-sulfur (Fe-S) centers, to quinones in the photosynthetic chain and possibly in a chloroplast respiratory chain. The immediate electron acceptor for the enzyme in this species is believed to be plastoquinone. Couples the redox reaction to proton translocation, and thus conserves the redox energy in a proton gradient. The protein is NAD(P)H-quinone oxidoreductase subunit H, chloroplastic of Cicer arietinum (Chickpea).